The chain runs to 405 residues: Acetate kinase (405 aa).

Asparagine 7 provides a ligand contact to Mg(2+). Position 14 (lysine 14) interacts with ATP. Arginine 90 is a binding site for substrate. The Proton donor/acceptor role is filled by aspartate 147. Residues 207–211 (HLGNG), 282–284 (DFR), and 331–335 (GVGEN) each bind ATP. Glutamate 384 lines the Mg(2+) pocket.

Belongs to the acetokinase family. Homodimer. Requires Mg(2+) as cofactor. Mn(2+) serves as cofactor.

It is found in the cytoplasm. It catalyses the reaction acetate + ATP = acetyl phosphate + ADP. The protein operates within metabolic intermediate biosynthesis; acetyl-CoA biosynthesis; acetyl-CoA from acetate: step 1/2. Catalyzes the formation of acetyl phosphate from acetate and ATP. Can also catalyze the reverse reaction. This Clostridium kluyveri (strain ATCC 8527 / DSM 555 / NBRC 12016 / NCIMB 10680 / K1) protein is Acetate kinase.